Consider the following 156-residue polypeptide: Small ribosomal subunit protein bS6 (156 aa).

Positions 95–156 (AITETSPLAK…DRDEQSEDSE (62 aa)) are disordered. Over residues 117–126 (RSGRDRDESG) the composition is skewed to basic and acidic residues.

Belongs to the bacterial ribosomal protein bS6 family.

Functionally, binds together with bS18 to 16S ribosomal RNA. The chain is Small ribosomal subunit protein bS6 from Nitrosococcus oceani (strain ATCC 19707 / BCRC 17464 / JCM 30415 / NCIMB 11848 / C-107).